Consider the following 132-residue polypeptide: Holo-[acyl-carrier-protein] synthase (132 aa).

Positions 8 and 62 each coordinate Mg(2+).

Belongs to the P-Pant transferase superfamily. AcpS family. The cofactor is Mg(2+).

Its subcellular location is the cytoplasm. The catalysed reaction is apo-[ACP] + CoA = holo-[ACP] + adenosine 3',5'-bisphosphate + H(+). Functionally, transfers the 4'-phosphopantetheine moiety from coenzyme A to a Ser of acyl-carrier-protein. This is Holo-[acyl-carrier-protein] synthase from Polaromonas sp. (strain JS666 / ATCC BAA-500).